The following is a 306-amino-acid chain: Uracil phosphoribosyltransferase homolog (306 aa).

2 disordered regions span residues 1–28 and 58–87; these read MATE…NPEP and SSVP…NYDA. 2 stretches are compositionally biased toward polar residues: residues 13–28 and 70–79; these read CHNQ…NPEP and GGATFNSENN. GTP contacts are provided by residues Arg130, Arg139, and 173–176; that span reads EKGN. Residue Arg183 participates in 5-phospho-alpha-D-ribose 1-diphosphate binding. Positions 200 and 229 each coordinate GTP. 235–243 provides a ligand contact to 5-phospho-alpha-D-ribose 1-diphosphate; it reads YPILSTGNT. 296–298 serves as a coordination point for uracil; the sequence is THF.

It belongs to the UPRTase family.

The protein localises to the cytoplasm. Its subcellular location is the nucleus. The chain is Uracil phosphoribosyltransferase homolog (UPRT) from Bos taurus (Bovine).